The following is a 503-amino-acid chain: ATP synthase subunit alpha (503 aa).

170–177 (GDRKTGKT) provides a ligand contact to ATP.

This sequence belongs to the ATPase alpha/beta chains family. F-type ATPases have 2 components, CF(1) - the catalytic core - and CF(0) - the membrane proton channel. CF(1) has five subunits: alpha(3), beta(3), gamma(1), delta(1), epsilon(1). CF(0) has four main subunits: a, b, b' and c.

It localises to the cellular thylakoid membrane. The enzyme catalyses ATP + H2O + 4 H(+)(in) = ADP + phosphate + 5 H(+)(out). Functionally, produces ATP from ADP in the presence of a proton gradient across the membrane. The alpha chain is a regulatory subunit. The sequence is that of ATP synthase subunit alpha from Rippkaea orientalis (strain PCC 8801 / RF-1) (Cyanothece sp. (strain PCC 8801)).